Consider the following 111-residue polypeptide: Cell division protein FtsB (111 aa).

Over 1–3 (MGK) the chain is Cytoplasmic. A helical membrane pass occupies residues 4-21 (LTLLLLILLGWLQYSLWL). Topologically, residues 22–111 (GKNGIHDYVR…TNTSSNNTQR (90 aa)) are periplasmic. Residues 33-63 (KDDVVVQQGNNAKLKDRNEQLFAEIDDLNGG) are a coiled coil. The disordered stretch occupies residues 88–111 (VPESNHRNANTPSSTNTSSNNTQR). Low complexity predominate over residues 97-111 (NTPSSTNTSSNNTQR).

This sequence belongs to the FtsB family. As to quaternary structure, part of a complex composed of FtsB, FtsL and FtsQ.

It is found in the cell inner membrane. In terms of biological role, essential cell division protein. May link together the upstream cell division proteins, which are predominantly cytoplasmic, with the downstream cell division proteins, which are predominantly periplasmic. The polypeptide is Cell division protein FtsB (Pectobacterium atrosepticum (strain SCRI 1043 / ATCC BAA-672) (Erwinia carotovora subsp. atroseptica)).